A 324-amino-acid polypeptide reads, in one-letter code: MDQSNMTSLAEEKAMNTSSRNASLGSSHPPIPIVHWVIMSISPLGFVENGILLWFLCFRMRRNPFTVYITHLSIADISLLFCIFILSIDYALDYELSSGHHYTIVTLSVTFLFGYNTGLYLLTAISVERCLSVLYPIWYRCHRPKHQSAFVCALLWALSCLVTTMEYVMCIDSGEESHSRSDCRAVIIFIAILSFLVFTPLMLVSSTILVVKIRKNTWASHSSKLYIVIMVTIIIFLIFAMPMRVLYLLYYEYWSAFGNLHNISLLFSTINSSANPFIYFFVGSSKKKRFRESLKVVLTRAFKDEMQPRRQEGNGNTVSIETVV.

The Extracellular portion of the chain corresponds to 1-35; that stretch reads MDQSNMTSLAEEKAMNTSSRNASLGSSHPPIPIVH. 3 N-linked (GlcNAc...) asparagine glycosylation sites follow: asparagine 5, asparagine 16, and asparagine 21. The chain crosses the membrane as a helical span at residues 36–60; it reads WVIMSISPLGFVENGILLWFLCFRM. Over 61–64 the chain is Cytoplasmic; sequence RRNP. The chain crosses the membrane as a helical span at residues 65–86; it reads FTVYITHLSIADISLLFCIFIL. Residues 87–103 lie on the Extracellular side of the membrane; that stretch reads SIDYALDYELSSGHHYT. A helical transmembrane segment spans residues 104-127; the sequence is IVTLSVTFLFGYNTGLYLLTAISV. Residues 128-148 lie on the Cytoplasmic side of the membrane; it reads ERCLSVLYPIWYRCHRPKHQS. A helical membrane pass occupies residues 149-171; sequence AFVCALLWALSCLVTTMEYVMCI. The Extracellular segment spans residues 172-184; it reads DSGEESHSRSDCR. The chain crosses the membrane as a helical span at residues 185–205; the sequence is AVIIFIAILSFLVFTPLMLVS. Residues 206–223 are Cytoplasmic-facing; the sequence is STILVVKIRKNTWASHSS. Residues 224–244 traverse the membrane as a helical segment; that stretch reads KLYIVIMVTIIIFLIFAMPMR. Over 245–262 the chain is Extracellular; sequence VLYLLYYEYWSAFGNLHN. A helical transmembrane segment spans residues 263-283; sequence ISLLFSTINSSANPFIYFFVG. Topologically, residues 284–324 are cytoplasmic; sequence SSKKKRFRESLKVVLTRAFKDEMQPRRQEGNGNTVSIETVV.

It belongs to the G-protein coupled receptor 1 family. As to quaternary structure, interacts with AGTR1. Interacts with FLNA (via filamin repeat 21); increases PKA-mediated phosphorylation of FLNA.

Its subcellular location is the cell membrane. In terms of biological role, acts specifically as a functional antagonist of AGTR1 (angiotensin-2 type 1 receptor), although it up-regulates AGTR1 receptor levels. Positive regulation of AGTR1 levels occurs through activation of the G-proteins GNA11 and GNAQ, and stimulation of the protein kinase C signaling cascade. The antagonist effect on AGTR1 function is probably due to AGTR1 being physically altered by MAS1. Receptor for angiotensin 1-7. The chain is Proto-oncogene Mas (Mas1) from Mus musculus (Mouse).